The following is a 580-amino-acid chain: Phosphatase and actin regulator 1 (580 aa).

2 positions are modified to phosphoserine: Ser-67 and Ser-78. Phosphothreonine is present on Thr-104. The Nuclear localization signal motif lies at 108 to 129; that stretch reads RRRSKFANLGRIFKPWKWRKKK. An RPEL 1 repeat occupies 138 to 163; the sequence is AALERKISMRQSREELIKRGVLKEIY. Disordered stretches follow at residues 331–355 and 376–410; these read EQRV…TKAG and KENV…SSLY. A compositionally biased stretch (polar residues) spans 335–345; that stretch reads PCSTSYHSSGL. Over residues 395–407 the composition is skewed to acidic residues; sequence EEEEEEEDEDDDS. 3 RPEL repeats span residues 422–447, 460–484, and 498–523; these read DSLA…PRQT, TKLT…LKPR, and RRLT…IRFS. The tract at residues 462-494 is disordered; that stretch reads LTRRLSQRPTAEELEQRNILKPRNEQEEQEEKR. The residue at position 467 (Ser-467) is a Phosphoserine. Positions 471–494 are enriched in basic and acidic residues; that stretch reads TAEELEQRNILKPRNEQEEQEEKR. The residue at position 505 (Ser-505) is a Phosphoserine.

The protein belongs to the phosphatase and actin regulator family. As to quaternary structure, interacts (via RPEL repeats) with ACTA1 and PPP1CA; ACTA1 and PPP1CA compete for the same binding site. In terms of tissue distribution, detected in umbilical vein endothelial cells.

It is found in the cytoplasm. It localises to the synapse. The protein resides in the nucleus. Binds actin monomers (G actin) and plays a role in multiple processes including the regulation of actin cytoskeleton dynamics, actin stress fibers formation, cell motility and survival, formation of tubules by endothelial cells, and regulation of PPP1CA activity. Involved in the regulation of cortical neuron migration and dendrite arborization. The sequence is that of Phosphatase and actin regulator 1 (PHACTR1) from Homo sapiens (Human).